Here is a 416-residue protein sequence, read N- to C-terminus: Gamma-glutamyl phosphate reductase (416 aa).

This sequence belongs to the gamma-glutamyl phosphate reductase family.

It localises to the cytoplasm. It catalyses the reaction L-glutamate 5-semialdehyde + phosphate + NADP(+) = L-glutamyl 5-phosphate + NADPH + H(+). The protein operates within amino-acid biosynthesis; L-proline biosynthesis; L-glutamate 5-semialdehyde from L-glutamate: step 2/2. Functionally, catalyzes the NADPH-dependent reduction of L-glutamate 5-phosphate into L-glutamate 5-semialdehyde and phosphate. The product spontaneously undergoes cyclization to form 1-pyrroline-5-carboxylate. This is Gamma-glutamyl phosphate reductase from Glaesserella parasuis serovar 5 (strain SH0165) (Haemophilus parasuis).